The primary structure comprises 406 residues: CinA-like protein (406 aa).

This sequence belongs to the CinA family.

This chain is CinA-like protein, found in Pseudothermotoga lettingae (strain ATCC BAA-301 / DSM 14385 / NBRC 107922 / TMO) (Thermotoga lettingae).